A 215-amino-acid polypeptide reads, in one-letter code: LysM and putative peptidoglycan-binding domain-containing protein 1 (215 aa).

The 45-residue stretch at 37 to 81 (LEHQVQPGDTLQGLALRYGVSMEQIKRANRLYTNDSIFLKKSLYI) folds into the LysM domain. 2 stretches are compositionally biased toward polar residues: residues 86-103 (GQSDLSDDQNSQEGSETE) and 173-189 (GNRTPSRQNSPQTQQRS). Disordered stretches follow at residues 86-133 (GQSD…PVDF) and 148-203 (AVKK…TRAS).

The chain is LysM and putative peptidoglycan-binding domain-containing protein 1 (lysmd1) from Xenopus laevis (African clawed frog).